A 402-amino-acid chain; its full sequence is UPF0261 protein mll9388 (402 aa).

The protein belongs to the UPF0261 family.

The polypeptide is UPF0261 protein mll9388 (Mesorhizobium japonicum (strain LMG 29417 / CECT 9101 / MAFF 303099) (Mesorhizobium loti (strain MAFF 303099))).